Consider the following 304-residue polypeptide: MQVSIEDIIENLDLEVLVKGKDGIKLGLSDINRPGLQFAGFYDYFGNERVQVIGKAEWSFLNAMPPEIREKRIRKYFQFETPCIVLARGLKPQKELLDCSKEYNRWLLRSKAQTTRFINKIMNYLDDKLAPETRIHGVLVDIYGLGILITGESGIGKSETALELIKRGHRLVADDAVDIKEIESVLVGKSPYITSGMLEVRGMGIIDVPALYGLSSVLSEKNINLVIYLEQWKEGRDYDRLGTDDEHIKILNIPVRKMTLPIRPGRNVAVIIEAAAANYRYNLSSKISPVDTINKRIEESTNYD.

Active-site residues include His136 and Lys157. 151 to 158 (GESGIGKS) contacts ATP. Ser158 is a Mg(2+) binding site. The active-site Proton acceptor; for phosphorylation activity. Proton donor; for dephosphorylation activity is the Asp175. The interval 198 to 207 (LEVRGMGIID) is important for the catalytic mechanism of both phosphorylation and dephosphorylation. Glu199 is a Mg(2+) binding site. Arg240 is a catalytic residue. The important for the catalytic mechanism of dephosphorylation stretch occupies residues 261-266 (PIRPGR).

It belongs to the HPrK/P family. Homohexamer. Mg(2+) is required as a cofactor.

It carries out the reaction [HPr protein]-L-serine + ATP = [HPr protein]-O-phospho-L-serine + ADP + H(+). The enzyme catalyses [HPr protein]-O-phospho-L-serine + phosphate + H(+) = [HPr protein]-L-serine + diphosphate. Its function is as follows. Catalyzes the ATP- as well as the pyrophosphate-dependent phosphorylation of a specific serine residue in HPr, a phosphocarrier protein of the phosphoenolpyruvate-dependent sugar phosphotransferase system (PTS). HprK/P also catalyzes the pyrophosphate-producing, inorganic phosphate-dependent dephosphorylation (phosphorolysis) of seryl-phosphorylated HPr (P-Ser-HPr). The two antagonistic activities of HprK/P are regulated by several intracellular metabolites, which change their concentration in response to the absence or presence of rapidly metabolisable carbon sources (glucose, fructose, etc.) in the growth medium. Therefore, by controlling the phosphorylation state of HPr, HPrK/P is a sensor enzyme that plays a major role in the regulation of carbon metabolism and sugar transport: it mediates carbon catabolite repression (CCR), and regulates PTS-catalyzed carbohydrate uptake and inducer exclusion. This chain is HPr kinase/phosphorylase, found in Clostridium acetobutylicum (strain ATCC 824 / DSM 792 / JCM 1419 / IAM 19013 / LMG 5710 / NBRC 13948 / NRRL B-527 / VKM B-1787 / 2291 / W).